Reading from the N-terminus, the 239-residue chain is tRNA (guanine-N(1)-)-methyltransferase (239 aa).

S-adenosyl-L-methionine is bound by residues glycine 112 and 132–137; that span reads IGDYVL.

It belongs to the RNA methyltransferase TrmD family. As to quaternary structure, homodimer.

The protein localises to the cytoplasm. It carries out the reaction guanosine(37) in tRNA + S-adenosyl-L-methionine = N(1)-methylguanosine(37) in tRNA + S-adenosyl-L-homocysteine + H(+). Specifically methylates guanosine-37 in various tRNAs. The polypeptide is tRNA (guanine-N(1)-)-methyltransferase (Rhodospirillum rubrum (strain ATCC 11170 / ATH 1.1.1 / DSM 467 / LMG 4362 / NCIMB 8255 / S1)).